A 134-amino-acid polypeptide reads, in one-letter code: DNA-binding protein H-NS (134 aa).

The DNA-binding element occupies 111 to 116; the sequence is QGRTLA.

The protein belongs to the histone-like protein H-NS family. As to quaternary structure, homodimer that oligomerizes on DNA into higher-order complexes that form bridges between disparate regions of DNA compacting it. Interacts with YmoA and other similar proteins.

The protein localises to the cytoplasm. Its subcellular location is the nucleoid. Functionally, a DNA-binding protein implicated in transcriptional repression and chromosome organization and compaction. Binds nucleation sites in AT-rich DNA and bridges them, forming higher-order nucleoprotein complexes and condensing the chromosome. As many horizontally transferred genes are AT-rich, it plays a central role in silencing foreign genes. A subset of genes are repressed by H-NS in association with other proteins. This Proteus vulgaris protein is DNA-binding protein H-NS (hns).